Reading from the N-terminus, the 227-residue chain is Ubiquitin domain-containing protein 1 (227 aa).

Residues 1-14 (MGGCVGRERAETRG) are compositionally biased toward basic and acidic residues. Positions 1-45 (MGGCVGRERAETRGRGSRTQRKRGGRNEPLKKDKPKWKSDYPMTE) are disordered. Residues 15 to 24 (RGSRTQRKRG) are compositionally biased toward basic residues. Residues 25–39 (GRNEPLKKDKPKWKS) are compositionally biased toward basic and acidic residues. The region spanning 150–225 (FQLKVRLSTG…IQVIVNQPAP (76 aa)) is the Ubiquitin-like domain.

Its function is as follows. May be involved in the regulation of cellular senescence through a positive feedback loop with TP53. In Danio rerio (Zebrafish), this protein is Ubiquitin domain-containing protein 1 (ubtd1).